The primary structure comprises 523 residues: Jerky protein homolog-like (523 aa).

The HTH psq-type domain maps to 1–52; sequence MSGKRKRVVLTIKDKLDIIKKLEDGGSSKQLAVIYGIGETTVRDIRKNKEKI. DNA-binding regions (H-T-H motif) lie at residues 28–48 and 100–132; these read SKQL…IRKN and PICA…FKQR. The HTH CENPB-type domain occupies 67-139; it reads KRKSMKPSMY…KQRHSIREIN (73 aa). The DDE-1 domain occupies 168-385; it reads LQPEQIYNAD…VKPVTISRAW (218 aa).

This sequence belongs to the tigger transposable element derived protein family.

The protein resides in the nucleus. The polypeptide is Jerky protein homolog-like (Jrkl) (Mus musculus (Mouse)).